A 181-amino-acid polypeptide reads, in one-letter code: Diphosphoinositol polyphosphate phosphohydrolase NUDT4B (181 aa).

Substrate contacts are provided by residues Arg-10, 18 to 20 (KKR), and 39 to 41 (SSR). Residues 18–145 (KKRAACLCFR…VHAEYLEKLK (128 aa)) form the Nudix hydrolase domain. Residues Gly-50 and Glu-66 each coordinate Mg(2+). A Nudix box motif is present at residues 51 to 72 (GGMEPEEEPGGAAVREVYEEAG). Glu-69 serves as the catalytic Proton acceptor. Glu-70 lines the Mg(2+) pocket. Residues 90 to 92 (RKH), Arg-116, and Lys-134 each bind substrate.

The protein belongs to the Nudix hydrolase family. DIPP subfamily. The cofactor is Mg(2+). Mn(2+) serves as cofactor.

It is found in the cytoplasm. The catalysed reaction is diphospho-myo-inositol polyphosphate + H2O = myo-inositol polyphosphate + phosphate.. Cleaves a beta-phosphate from the diphosphate groups in PP-InsP5 (diphosphoinositol pentakisphosphate), PP-InsP4 and [PP]2-InsP4 (bisdiphosphoinositol tetrakisphosphate), suggesting that it may play a role in signal transduction. Also able to catalyze the hydrolysis of dinucleoside oligophosphate Ap6A, but not Ap5A. The major reaction products are ADP and p4a from Ap6A. Also able to hydrolyze 5-phosphoribose 1-diphosphate. Does not play a role in U8 snoRNA decapping activity. Binds U8 snoRNA. In Homo sapiens (Human), this protein is Diphosphoinositol polyphosphate phosphohydrolase NUDT4B.